Consider the following 119-residue polypeptide: Beta-2-microglobulin (119 aa).

An N-terminal signal peptide occupies residues 1–20; that stretch reads MACSVVVALLALLSLSGLEA. Residues 25 to 114 form the Ig-like C1-type domain; that stretch reads PKIQVYSRHP…VTFSTPKTVK (90 aa). A disulfide bond links Cys-45 and Cys-100.

This sequence belongs to the beta-2-microglobulin family. Heterodimer of an alpha chain and a beta chain. Beta-2-microglobulin is the beta-chain of major histocompatibility complex class I molecules.

The protein localises to the secreted. Component of the class I major histocompatibility complex (MHC). Involved in the presentation of peptide antigens to the immune system. This chain is Beta-2-microglobulin (B2M), found in Mico emiliae (Emilia's marmoset).